A 245-amino-acid polypeptide reads, in one-letter code: Eukaryotic translation initiation factor 4E type 2 (245 aa).

The span at 1 to 38 (MNNKFDALKDDDSGDHDQNEENSTQKDGEKEKTDRDKS) shows a compositional bias: basic and acidic residues. The tract at residues 1 to 52 (MNNKFDALKDDDSGDHDQNEENSTQKDGEKEKTDRDKSQSSGKRKAVVPGPA) is disordered. Ser13 bears the Phosphoserine mark. Positions 54–57 (HPLQ) are EIF4EBP1/2/3 binding. MRNA is bound at residue 78-79 (YE). The tract at residues 95 to 99 (WKFYS) is EIF4EBP1/2/3 binding. Residues His110 and 124–125 (WE) each bind mRNA. Position 134 is an N6-acetyllysine; alternate (Lys134). Residue Lys134 forms a Glycyl lysine isopeptide (Lys-Gly) (interchain with G-Cter in ISG15); alternate linkage. Positions 150 to 157 (NLILAMLG) are EIF4EBP1/2/3 binding. MRNA is bound by residues 174–179 (RFQEDI) and 222–224 (KMP). Residue Lys222 forms a Glycyl lysine isopeptide (Lys-Gly) (interchain with G-Cter in ISG15) linkage.

This sequence belongs to the eukaryotic initiation factor 4E family. In terms of assembly, interacts with EIF4EBP1, EIF4EBP2 and EIF4EBP3. Does not interact with eIF4G (EIF4G1, EIF4G2 or EIF4G3). Component of the 4EHP-GYF2 complex, at least composed of EIF4E2, GIGYF2 and ZNF598. Interacts with GIGYF2 (via the 4EHP-binding motif); the interaction is direct. Interacts with EIF4ENIF1/4E-T (via YXXXXLphi motif); increasing affinity for the 7-methylguanosine-containing mRNA cap. Ubiquitinated by ARIH1. The consequences of ubiquitination are however unclear: according to a report, EIF4E2 ubiquitination leads to promote EIF4E2 cap-binding and protein translation arrest. According to another report ubiquitination leads to its subsequent degradation. Post-translationally, ISGylation enhances its cap structure-binding activity and translation-inhibition activity. Widely expressed with highest levels in testis, kidney and liver.

The protein resides in the cytoplasm. Its subcellular location is the P-body. Its function is as follows. Recognizes and binds the 7-methylguanosine-containing mRNA cap during an early step in the initiation. Acts as a repressor of translation initiation. In contrast to EIF4E, it is unable to bind eIF4G (EIF4G1, EIF4G2 or EIF4G3), suggesting that it acts by competing with EIF4E and block assembly of eIF4F at the cap. In P-bodies, component of a complex that promotes miRNA-mediated translational repression. Involved in virus-induced host response by mediating miRNA MIR34A-induced translational silencing which controls IFNB1 production by a negative feedback mechanism. In terms of biological role, component of the 4EHP-GYF2 complex, a multiprotein complex that acts as a repressor of translation initiation. In association with GIGYF2, assists ribosome-associated quality control (RQC) by sequestering the mRNA cap, blocking ribosome initiation and decreasing the translational load on problematic messages. Part of a pathway that works in parallel to RQC-mediated degradation of the stalled nascent polypeptide. GIGYF2 and EIF4E2 work downstream and independently of ZNF598, which seems to work as a scaffold that can recruit them to faulty mRNA even if alternative recruitment mechanisms may exist. This is Eukaryotic translation initiation factor 4E type 2 from Mus musculus (Mouse).